The sequence spans 428 residues: Adenylosuccinate synthetase (428 aa).

GTP contacts are provided by residues 12–18 (GDEGKGK) and 40–42 (GHT). D13 acts as the Proton acceptor in catalysis. Residues D13 and G40 each contribute to the Mg(2+) site. Residues 13 to 16 (DEGK), 38 to 41 (NAGH), T128, R142, Q223, T238, and R302 each bind IMP. H41 acts as the Proton donor in catalysis. 298–304 (TTTGRPR) contacts substrate. Residues R304, 330 to 332 (SID), and 412 to 414 (SVG) each bind GTP.

The protein belongs to the adenylosuccinate synthetase family. In terms of assembly, homodimer. The cofactor is Mg(2+).

Its subcellular location is the cytoplasm. It catalyses the reaction IMP + L-aspartate + GTP = N(6)-(1,2-dicarboxyethyl)-AMP + GDP + phosphate + 2 H(+). It participates in purine metabolism; AMP biosynthesis via de novo pathway; AMP from IMP: step 1/2. Its function is as follows. Plays an important role in the de novo pathway of purine nucleotide biosynthesis. Catalyzes the first committed step in the biosynthesis of AMP from IMP. This is Adenylosuccinate synthetase from Shouchella clausii (strain KSM-K16) (Alkalihalobacillus clausii).